We begin with the raw amino-acid sequence, 571 residues long: Carboxylesterase 3 (571 aa).

The N-terminal stretch at 1 to 26 is a signal peptide; it reads MERAVRVESGVLVGVVCLLLACPATA. Cys97 and Cys124 are oxidised to a cystine. Asn105 is a glycosylation site (N-linked (GlcNAc...) asparagine). Residue Ser229 is the Acyl-ester intermediate of the active site. An intrachain disulfide couples Cys281 to Cys292. Active-site charge relay system residues include Glu347 and His460. Residues 568–571 carry the Prevents secretion from ER motif; sequence QEDL.

It belongs to the type-B carboxylesterase/lipase family. Post-translationally, N-glycosylated. In terms of tissue distribution, expressed in liver, colon and small intestine.

It is found in the endoplasmic reticulum lumen. The enzyme catalyses a carboxylic ester + H2O = an alcohol + a carboxylate + H(+). Functionally, involved in the detoxification of xenobiotics and in the activation of ester and amide prodrugs. Shows low catalytic efficiency for hydrolysis of CPT-11 (7-ethyl-10-[4-(1-piperidino)-1-piperidino]-carbonyloxycamptothecin), a prodrug for camptothecin used in cancer therapeutics. In Homo sapiens (Human), this protein is Carboxylesterase 3 (CES3).